The primary structure comprises 432 residues: Adenylosuccinate synthetase (432 aa).

Residues 13-19 (GDEGKGK) and 41-43 (GHT) contribute to the GTP site. The active-site Proton acceptor is Asp14. Residues Asp14 and Gly41 each coordinate Mg(2+). Residues 14-17 (DEGK), 39-42 (NAGH), Thr130, Arg144, Gln225, Thr240, and Arg304 contribute to the IMP site. The active-site Proton donor is the His42. 300-306 (AVTGRPR) provides a ligand contact to substrate. Residues Arg306, 332–334 (KLD), and 415–417 (STG) contribute to the GTP site.

Belongs to the adenylosuccinate synthetase family. Homodimer. Requires Mg(2+) as cofactor.

It localises to the cytoplasm. It carries out the reaction IMP + L-aspartate + GTP = N(6)-(1,2-dicarboxyethyl)-AMP + GDP + phosphate + 2 H(+). Its pathway is purine metabolism; AMP biosynthesis via de novo pathway; AMP from IMP: step 1/2. Functionally, plays an important role in the de novo pathway of purine nucleotide biosynthesis. Catalyzes the first committed step in the biosynthesis of AMP from IMP. The chain is Adenylosuccinate synthetase from Mannheimia succiniciproducens (strain KCTC 0769BP / MBEL55E).